A 271-amino-acid chain; its full sequence is Mannosyl-3-phosphoglycerate phosphatase (271 aa).

The Nucleophile role is filled by Asp13. Mg(2+)-binding residues include Asp13, Asp15, and Asp214.

The protein belongs to the HAD-like hydrolase superfamily. MPGP family. It depends on Mg(2+) as a cofactor.

Its subcellular location is the cytoplasm. It catalyses the reaction 2-O-(alpha-D-mannosyl)-3-phosphoglycerate + H2O = (2R)-2-O-(alpha-D-mannosyl)-glycerate + phosphate. In Escherichia coli O127:H6 (strain E2348/69 / EPEC), this protein is Mannosyl-3-phosphoglycerate phosphatase.